A 241-amino-acid polypeptide reads, in one-letter code: Glucosamine-6-phosphate deaminase (241 aa).

The Proton acceptor; for enolization step role is filled by aspartate 67. Asparagine 136 acts as the For ring-opening step in catalysis. The active-site Proton acceptor; for ring-opening step is histidine 138. Glutamate 143 serves as the catalytic For ring-opening step.

The protein belongs to the glucosamine/galactosamine-6-phosphate isomerase family. NagB subfamily.

The enzyme catalyses alpha-D-glucosamine 6-phosphate + H2O = beta-D-fructose 6-phosphate + NH4(+). The protein operates within amino-sugar metabolism; N-acetylneuraminate degradation; D-fructose 6-phosphate from N-acetylneuraminate: step 5/5. Its function is as follows. Catalyzes the reversible isomerization-deamination of glucosamine 6-phosphate (GlcN6P) to form fructose 6-phosphate (Fru6P) and ammonium ion. The protein is Glucosamine-6-phosphate deaminase of Alkaliphilus oremlandii (strain OhILAs) (Clostridium oremlandii (strain OhILAs)).